The following is a 222-amino-acid chain: Protein ORM1 (222 aa).

A disordered region spans residues Met1–His57. Topologically, residues Met1–Ala85 are cytoplasmic. Residues Ala12–Asp23 are compositionally biased toward polar residues. Ser29, Ser32, and Ser56 each carry phosphoserine. Residues Trp86 to Val106 traverse the membrane as a helical segment. Over Thr107–Glu109 the chain is Extracellular. The chain crosses the membrane as a helical span at residues Trp110 to Ile130. Over Lys131–Lys162 the chain is Cytoplasmic. The helical transmembrane segment at Phe163–Leu183 threads the bilayer. Residue Lys184 is a topological domain, extracellular. A helical membrane pass occupies residues Leu185–Thr205. Residues His206–Ser222 are Cytoplasmic-facing.

Belongs to the ORM family. Component of the SPOTS complex, at least composed of LCB1/2 (LCB1 and/or LCB2), ORM1/2 (ORM1 and/or ORM2), SAC1 and TSC3. Phosphorylated in case of disruption of sphingolipid synthesis. Phosphorylation regulates inhibitory activity of serine palmitoyltransferases (LCB1 and LCB2).

The protein localises to the endoplasmic reticulum membrane. Functionally, component of the SPOTS complex that acts as a negative regulator of sphingolipid synthesis. Acts by inhibiting serine palmitoyltransferases (LCB1 and LCB2) activity. Along with ORM2, plays a role in the phosphorylation of LAC1 and YPK1, the distribution of actin patches between mother and daughter cells, and in endocytosis. Disruption or inhibition of sphingolipid synthesis leads to the activation and phosphorylation of YPK1 through the TORC2 and PKH1 pathways, which in turn phosphorylates ORM1 and LAG1 to activate sphingolipid synthesis. This Saccharomyces cerevisiae (strain ATCC 204508 / S288c) (Baker's yeast) protein is Protein ORM1 (ORM1).